The primary structure comprises 704 residues: Methionine--tRNA ligase (704 aa).

Residues 17–27 carry the 'HIGH' region motif; it reads PYANGPIHLGH. Residues C148, C151, C161, and C164 each coordinate Zn(2+). The 'KMSKS' region signature appears at 348–352; it reads KMSKS. An ATP-binding site is contributed by K351. A tRNA-binding domain is found at 603–704; that stretch reads ELSKVELRVG…KDAKPGDRLK (102 aa).

It belongs to the class-I aminoacyl-tRNA synthetase family. MetG type 1 subfamily. In terms of assembly, homodimer. Zn(2+) is required as a cofactor.

The protein resides in the cytoplasm. It catalyses the reaction tRNA(Met) + L-methionine + ATP = L-methionyl-tRNA(Met) + AMP + diphosphate. In terms of biological role, is required not only for elongation of protein synthesis but also for the initiation of all mRNA translation through initiator tRNA(fMet) aminoacylation. This chain is Methionine--tRNA ligase, found in Leptospira borgpetersenii serovar Hardjo-bovis (strain L550).